The chain runs to 619 residues: Chaperone protein HscA homolog (619 aa).

Belongs to the heat shock protein 70 family.

In terms of biological role, chaperone involved in the maturation of iron-sulfur cluster-containing proteins. Has a low intrinsic ATPase activity which is markedly stimulated by HscB. The protein is Chaperone protein HscA homolog of Haemophilus influenzae (strain PittEE).